Here is a 563-residue protein sequence, read N- to C-terminus: Arginine--tRNA ligase (563 aa).

Positions 121–131 match the 'HIGH' region motif; sequence PNIAKPFSIGH.

Belongs to the class-I aminoacyl-tRNA synthetase family. Monomer.

The protein localises to the cytoplasm. It carries out the reaction tRNA(Arg) + L-arginine + ATP = L-arginyl-tRNA(Arg) + AMP + diphosphate. The chain is Arginine--tRNA ligase from Streptococcus pyogenes serotype M12 (strain MGAS2096).